Reading from the N-terminus, the 282-residue chain is NAD(P)H-hydrate epimerase (282 aa).

The N-terminal 53 residues, 1 to 53 (MSGLRTLLGLGLLVAGSRLPRVISQQSVCRARPIWWGTQRRGSETMAGAAVKY), are a transit peptide targeting the mitochondrion. S43 carries the post-translational modification Phosphoserine; by PKA. A YjeF N-terminal domain is found at 59–269 (AQAVDQELFN…ALEKKYQLNL (211 aa)). 113 to 117 (NNGGD) provides a ligand contact to (6S)-NADPHX. K(+) is bound at residue N114. An N6-succinyllysine modification is found at K138. D179 serves as a coordination point for K(+). (6S)-NADPHX-binding positions include 183 to 189 (GFSFKGD) and D212. S215 serves as a coordination point for K(+).

The protein belongs to the NnrE/AIBP family. Homodimer. Interacts with APOA1 and APOA2. K(+) is required as a cofactor. Post-translationally, undergoes physiological phosphorylation during sperm capacitation, downstream to PKA activation. As to expression, detected in testis and sperm (at protein level). Expressed at high levels in heart, liver, kidney, and testis.

It is found in the mitochondrion. Its subcellular location is the secreted. It carries out the reaction (6R)-NADHX = (6S)-NADHX. The enzyme catalyses (6R)-NADPHX = (6S)-NADPHX. Catalyzes the epimerization of the S- and R-forms of NAD(P)HX, a damaged form of NAD(P)H that is a result of enzymatic or heat-dependent hydration. This is a prerequisite for the S-specific NAD(P)H-hydrate dehydratase to allow the repair of both epimers of NAD(P)HX. Accelerates cholesterol efflux from endothelial cells to high-density lipoprotein (HDL) and thereby regulates angiogenesis. This chain is NAD(P)H-hydrate epimerase, found in Mus musculus (Mouse).